A 368-amino-acid chain; its full sequence is Polynucleotide 5'-hydroxyl-kinase NOL9 (368 aa).

36–43 is a binding site for ATP; sequence GPKNSGKS.

The protein belongs to the Clp1 family. NOL9/GRC3 subfamily.

The protein resides in the nucleus. The protein localises to the nucleolus. In terms of biological role, polynucleotide 5'-kinase involved in rRNA processing. In Arabidopsis thaliana (Mouse-ear cress), this protein is Polynucleotide 5'-hydroxyl-kinase NOL9.